Consider the following 412-residue polypeptide: MKSEELFTTAKTCLPGGVSSPVRAIKPYPFYVKSARGATLETEDGESLVDCCMGYGPLLLGHAHPAIQKAIEAQLDAGWLYGTPTKLEIDLAQRICRDHPSIEMLRCVSTGLEATLAAIRLARGFTGKCGIVKLEGGFHGAHDAVLIAAGSGATTHGTPDSLGVPPSFAAQTRQVPYNDPEALEELLSKDKEIAAFILEPVMGNVGPVLPDDGYLSAVREITKAHDVLLIFDEVITGYRVGIGGAQKKYGIKPDLTTLGKITGGGLPIGVFGGRRDIMELVSPSGGVYNAGTFNGNPLSMAAGIATNVYLHENESLYAELDEKTRAIEESLPAKASGSFVRLGSLFKYFFRSTAPRNYLEAKESDTAAFRVFFEKALKDGVFIPPSQFETNFLSTAHDASSMEKIISVYQHV.

Lysine 260 is modified (N6-(pyridoxal phosphate)lysine).

Belongs to the class-III pyridoxal-phosphate-dependent aminotransferase family. HemL subfamily. Pyridoxal 5'-phosphate serves as cofactor.

It localises to the cytoplasm. The enzyme catalyses (S)-4-amino-5-oxopentanoate = 5-aminolevulinate. It participates in porphyrin-containing compound metabolism; protoporphyrin-IX biosynthesis; 5-aminolevulinate from L-glutamyl-tRNA(Glu): step 2/2. The protein is Glutamate-1-semialdehyde 2,1-aminomutase of Methanocorpusculum labreanum (strain ATCC 43576 / DSM 4855 / Z).